The primary structure comprises 477 residues: D(1B) dopamine receptor (477 aa).

Topologically, residues 1-39 (MLPPGSNGTAYPGQFALYQQLAQGNAVGGSAGAPPLGPS) are extracellular. N-linked (GlcNAc...) asparagine glycosylation occurs at N7. Residues 40 to 66 (QVVTACLLTLLIIWTLLGNVLVCAAIV) form a helical membrane-spanning segment. Over 67-77 (RSRHLRANMTN) the chain is Cytoplasmic. A helical membrane pass occupies residues 78 to 104 (VFIVSLAVSDLFVALLVMPWKAVAEVA). At 105–114 (GYWPFGAFCD) the chain is on the extracellular side. A disulfide bridge connects residues C113 and C217. The helical transmembrane segment at 115-136 (VWVAFDIMCSTASILNLCVISV) threads the bilayer. At 137 to 158 (DRYWAISRPFRYKRKMTQRMAL) the chain is on the cytoplasmic side. The helical transmembrane segment at 159–180 (VMVGLAWTLSILISFIPVQLNW) threads the bilayer. The Extracellular segment spans residues 181–223 (HRDQAASWGGLDLPNNLANWTPWEEDFWEPDVNAENCDSSLNR). N222 carries an N-linked (GlcNAc...) asparagine glycan. The chain crosses the membrane as a helical span at residues 224–246 (TYAISSSLISFYIPVAIMIVTYT). Residues 247 to 296 (RIYRIAQVQIRRISSLERAAEHAQSCRSSAACAPDTSLRASIKKETKVLK) lie on the Cytoplasmic side of the membrane. Residues 297-320 (TLSVIMGVFVCCWLPFFILNCMVP) traverse the membrane as a helical segment. At 321–340 (FCSGHPEGPPAGFPCVSETT) the chain is on the extracellular side. The chain crosses the membrane as a helical span at residues 341 to 360 (FDVFVWFGWANSSLNPVIYA). Topologically, residues 361 to 477 (FNADFQKVFA…ITPFTPNGFH (117 aa)) are cytoplasmic. C375 carries S-palmitoyl cysteine lipidation.

This sequence belongs to the G-protein coupled receptor 1 family. Neuron-specific, localized primarily within limbic regions of the brain.

It localises to the cell membrane. Its function is as follows. Dopamine receptor whose activity is mediated by G proteins which activate adenylyl cyclase. The chain is D(1B) dopamine receptor (DRD5) from Homo sapiens (Human).